A 180-amino-acid polypeptide reads, in one-letter code: Inorganic pyrophosphatase (180 aa).

Residues Lys-30, Arg-44, and Tyr-56 each contribute to the substrate site. Residues Asp-66, Asp-71, and Asp-103 each coordinate Mg(2+). Tyr-142 lines the substrate pocket.

It belongs to the PPase family. Homohexamer. The cofactor is Mg(2+).

The protein localises to the cytoplasm. It catalyses the reaction diphosphate + H2O = 2 phosphate + H(+). Catalyzes the hydrolysis of inorganic pyrophosphate (PPi) forming two phosphate ions. The sequence is that of Inorganic pyrophosphatase from Buchnera aphidicola subsp. Schizaphis graminum (strain Sg).